The primary structure comprises 105 residues: Translation initiation factor 1A (105 aa).

The region spanning 18–92 (IRVKLPNKRI…DKCDIIYRYT (75 aa)) is the S1-like domain.

Belongs to the eIF-1A family.

In terms of biological role, seems to be required for maximal rate of protein biosynthesis. Enhances ribosome dissociation into subunits and stabilizes the binding of the initiator Met-tRNA(I) to 40 S ribosomal subunits. This chain is Translation initiation factor 1A (eIF1A), found in Methanocorpusculum labreanum (strain ATCC 43576 / DSM 4855 / Z).